The chain runs to 299 residues: ATP phosphoribosyltransferase (299 aa).

It belongs to the ATP phosphoribosyltransferase family. Long subfamily. The cofactor is Mg(2+).

The protein localises to the cytoplasm. The catalysed reaction is 1-(5-phospho-beta-D-ribosyl)-ATP + diphosphate = 5-phospho-alpha-D-ribose 1-diphosphate + ATP. Its pathway is amino-acid biosynthesis; L-histidine biosynthesis; L-histidine from 5-phospho-alpha-D-ribose 1-diphosphate: step 1/9. With respect to regulation, feedback inhibited by histidine. Functionally, catalyzes the condensation of ATP and 5-phosphoribose 1-diphosphate to form N'-(5'-phosphoribosyl)-ATP (PR-ATP). Has a crucial role in the pathway because the rate of histidine biosynthesis seems to be controlled primarily by regulation of HisG enzymatic activity. The chain is ATP phosphoribosyltransferase from Shewanella piezotolerans (strain WP3 / JCM 13877).